We begin with the raw amino-acid sequence, 279 residues long: MVDHLANTEINSQRIAAVESCFGASGQPLALPGRVLLGEGVLTKECRKKAKPRIFFLFNDILVYGSIVLNKRKYRSQHIIPLEEVTLELLPETLQAKNRWMIKTAKKSFVVSAASATERQEWISHIEECVRRQLRATGRPPSTEHAAPWIPDKATDICMRCTQTRFSALTRRHHCRKCGFVVCAECSRQRFLLPRLSPKPVRVCSLCYRELAAQQRQEEAEEQGAGSPGQPAHLARPICGASSGDDDDSDEDKEGSRDGDWPSSVEFYASGVAWSAFHS.

Positions 35 to 131 constitute a PH domain; sequence VLLGEGVLTK…WISHIEECVR (97 aa). The segment at 152–212 adopts an FYVE-type zinc-finger fold; it reads DKATDICMRC…VCSLCYRELA (61 aa). Positions 158, 161, 175, 178, 183, 186, 204, and 207 each coordinate Zn(2+). Positions 218 to 264 are disordered; the sequence is EEAEEQGAGSPGQPAHLARPICGASSGDDDDSDEDKEGSRDGDWPSS. The span at 244–253 shows a compositional bias: acidic residues; that stretch reads GDDDDSDEDK.

Highly expressed in heart and skeletal muscle. Weakly expressed in brain, thymus, spleen, kidney, liver, small intestine, placenta and lung.

It is found in the nucleus. Its subcellular location is the cytoplasm. The protein localises to the perinuclear region. The protein resides in the lysosome. May induce apoptosis through the lysosomal-mitochondrial pathway. Translocates to the lysosome initiating the permeabilization of lysosomal membrane (LMP) and resulting in the release of CTSD and CTSL to the cytoplasm. Triggers the caspase-independent apoptosis by altering mitochondrial membrane permeabilization (MMP) resulting in the release of PDCD8. This Homo sapiens (Human) protein is Pleckstrin homology domain-containing family F member 1 (PLEKHF1).